We begin with the raw amino-acid sequence, 170 residues long: MSNFKVRDPVIQERLDHDYAHHPLVARMNTLDQGNMSQAEYLVQKRHYLVFLIAHHYYEAYLRRMGGIQRRDHLQTLRDQKPRERADRVSAASAYDAGTFTVPSRPGPASGTTPGGQDSLGVSGSSITTLSSGPHSLSPASDILTTLSSTTETAAPAVADARKPPSGKKK.

Basic and acidic residues predominate over residues 76–88; it reads TLRDQKPRERADR. The interval 76 to 170 is disordered; sequence TLRDQKPRER…ARKPPSGKKK (95 aa). A compositionally biased stretch (polar residues) spans 110–139; that stretch reads SGTTPGGQDSLGVSGSSITTLSSGPHSLSP. Residues 144–155 are compositionally biased toward low complexity; the sequence is LTTLSSTTETAA.

The protein belongs to the herpesviridae small capsomere-interacting protein family. Interacts with the major capsid protein/MCP.

It is found in the virion. It localises to the host nucleus. In terms of biological role, participates in the assembly of the infectious particles by decorating the outer surface of the capsid shell and thus forming a layer between the capsid and the tegument. Complexes composed of the major capsid protein and small capsomere-interacting protein/SCP assemble together in the host cytoplasm and are translocated to the nucleus, where they accumulate and participate in capsid assembly. The protein is Small capsomere-interacting protein of Homo sapiens (Human).